A 448-amino-acid chain; its full sequence is Phosphoglucosamine mutase (448 aa).

The active-site Phosphoserine intermediate is the Ser-104. Mg(2+)-binding residues include Ser-104, Asp-243, Asp-245, and Asp-247. Phosphoserine is present on Ser-104.

This sequence belongs to the phosphohexose mutase family. Mg(2+) serves as cofactor. In terms of processing, activated by phosphorylation.

The enzyme catalyses alpha-D-glucosamine 1-phosphate = D-glucosamine 6-phosphate. Functionally, catalyzes the conversion of glucosamine-6-phosphate to glucosamine-1-phosphate. This chain is Phosphoglucosamine mutase, found in Xylella fastidiosa (strain Temecula1 / ATCC 700964).